A 750-amino-acid polypeptide reads, in one-letter code: Penicillin-binding protein 2x (750 aa).

Residues 29–49 (LSLLSVFVFAIFLVNFAVIIG) form a helical membrane-spanning segment. S337 acts as the Acyl-ester intermediate in catalysis. 2 consecutive PASTA domains span residues 632-691 (QQSP…ILSD) and 692-750 (KAEE…TLGD).

This sequence belongs to the transpeptidase family.

The protein localises to the cell membrane. A transpeptidase that forms peptide cross-links between adjacent glycan strands in cell wall peptidoglycan (PG). Part of the divisome machinery that synthesizes the septal cross wall. Beta-lactams inactivate the PBPs by acylating an essential serine residue in the active site of these proteins. This Streptococcus pneumoniae serotype 4 (strain ATCC BAA-334 / TIGR4) protein is Penicillin-binding protein 2x (pbpX).